Here is a 671-residue protein sequence, read N- to C-terminus: DNA ligase (671 aa).

NAD(+)-binding positions include 32-36 (DAEYD), 81-82 (SL), and E113. K115 serves as the catalytic N6-AMP-lysine intermediate. NAD(+) contacts are provided by R136, E173, K290, and K314. The Zn(2+) site is built by C408, C411, C426, and C432. The BRCT domain maps to 593–671 (EIDSPFAGKT…EAEMIRLLGA (79 aa)).

It belongs to the NAD-dependent DNA ligase family. LigA subfamily. Requires Mg(2+) as cofactor. Mn(2+) is required as a cofactor.

The enzyme catalyses NAD(+) + (deoxyribonucleotide)n-3'-hydroxyl + 5'-phospho-(deoxyribonucleotide)m = (deoxyribonucleotide)n+m + AMP + beta-nicotinamide D-nucleotide.. Its function is as follows. DNA ligase that catalyzes the formation of phosphodiester linkages between 5'-phosphoryl and 3'-hydroxyl groups in double-stranded DNA using NAD as a coenzyme and as the energy source for the reaction. It is essential for DNA replication and repair of damaged DNA. The sequence is that of DNA ligase from Salmonella typhi.